Consider the following 365-residue polypeptide: tRNA 2-selenouridine synthase (365 aa).

The Rhodanese domain occupies Phe12–Gln136. The S-selanylcysteine intermediate role is filled by Cys95.

Belongs to the SelU family. Monomer.

The catalysed reaction is 5-methylaminomethyl-2-thiouridine(34) in tRNA + selenophosphate + (2E)-geranyl diphosphate + H2O + H(+) = 5-methylaminomethyl-2-selenouridine(34) in tRNA + (2E)-thiogeraniol + phosphate + diphosphate. It carries out the reaction 5-methylaminomethyl-2-thiouridine(34) in tRNA + (2E)-geranyl diphosphate = 5-methylaminomethyl-S-(2E)-geranyl-thiouridine(34) in tRNA + diphosphate. The enzyme catalyses 5-methylaminomethyl-S-(2E)-geranyl-thiouridine(34) in tRNA + selenophosphate + H(+) = 5-methylaminomethyl-2-(Se-phospho)selenouridine(34) in tRNA + (2E)-thiogeraniol. It catalyses the reaction 5-methylaminomethyl-2-(Se-phospho)selenouridine(34) in tRNA + H2O = 5-methylaminomethyl-2-selenouridine(34) in tRNA + phosphate. Functionally, involved in the post-transcriptional modification of the uridine at the wobble position (U34) of tRNA(Lys), tRNA(Glu) and tRNA(Gln). Catalyzes the conversion of 2-thiouridine (S2U-RNA) to 2-selenouridine (Se2U-RNA). Acts in a two-step process involving geranylation of 2-thiouridine (S2U) to S-geranyl-2-thiouridine (geS2U) and subsequent selenation of the latter derivative to 2-selenouridine (Se2U) in the tRNA chain. In Pseudomonas putida (strain W619), this protein is tRNA 2-selenouridine synthase.